The primary structure comprises 88 residues: Large ribosomal subunit protein bL31B (88 aa).

Belongs to the bacterial ribosomal protein bL31 family. Type B subfamily. As to quaternary structure, part of the 50S ribosomal subunit.

The chain is Large ribosomal subunit protein bL31B from Paraburkholderia phytofirmans (strain DSM 17436 / LMG 22146 / PsJN) (Burkholderia phytofirmans).